A 607-amino-acid chain; its full sequence is Rap1 GTPase-GDP dissociation stimulator 1-A (607 aa).

5 ARM repeats span residues 79–118, 170–211, 347–390, 391–431, and 479–519; these read ELMR…NICY, DSLQ…NLAE, DGNC…NLAI, PVVN…MLID, and SKDV…LIAA.

Interacts with ralB. Probably interacts with the post-translationally isoprenylated (geranyl-geranylation) forms of ral proteins. Interacts with both GDP-bound and GTP-bound forms of ralA, but interaction is much stronger with ralA-GDP. In terms of tissue distribution, weakly expressed in adult tissues with highest levels found in spleen, kidney, skin and A6 cells.

The protein localises to the cytoplasm. Its subcellular location is the cytosol. It is found in the endoplasmic reticulum. It localises to the mitochondrion. In terms of biological role, stimulates GDP/GTP exchange reaction of a group of small GTP-binding proteins (G proteins) including Rap1a/Rap1b, RhoA, RhoB and KRas, by stimulating the dissociation of GDP from and the subsequent binding of GTP to each small G protein. This chain is Rap1 GTPase-GDP dissociation stimulator 1-A (rap1gds1-a), found in Xenopus laevis (African clawed frog).